We begin with the raw amino-acid sequence, 637 residues long: DNA gyrase subunit B (637 aa).

Residues 421-535 form the Toprim domain; that stretch reads SEIYIVEGDS…HGYVYIAQPP (115 aa). Positions 427, 500, and 502 each coordinate Mg(2+).

The protein belongs to the type II topoisomerase GyrB family. In terms of assembly, heterotetramer, composed of two GyrA and two GyrB chains. In the heterotetramer, GyrA contains the active site tyrosine that forms a transient covalent intermediate with DNA, while GyrB binds cofactors and catalyzes ATP hydrolysis. The cofactor is Mg(2+). Requires Mn(2+) as cofactor. It depends on Ca(2+) as a cofactor.

Its subcellular location is the cytoplasm. The catalysed reaction is ATP-dependent breakage, passage and rejoining of double-stranded DNA.. A type II topoisomerase that negatively supercoils closed circular double-stranded (ds) DNA in an ATP-dependent manner to modulate DNA topology and maintain chromosomes in an underwound state. Negative supercoiling favors strand separation, and DNA replication, transcription, recombination and repair, all of which involve strand separation. Also able to catalyze the interconversion of other topological isomers of dsDNA rings, including catenanes and knotted rings. Type II topoisomerases break and join 2 DNA strands simultaneously in an ATP-dependent manner. This is DNA gyrase subunit B from Halalkalibacterium halodurans (strain ATCC BAA-125 / DSM 18197 / FERM 7344 / JCM 9153 / C-125) (Bacillus halodurans).